The sequence spans 95 residues: UPF0473 protein ABC1595 (95 aa).

This sequence belongs to the UPF0473 family.

This Shouchella clausii (strain KSM-K16) (Alkalihalobacillus clausii) protein is UPF0473 protein ABC1595.